Reading from the N-terminus, the 332-residue chain is Spherulin-4 (332 aa).

A signal peptide spans 1 to 22; sequence MNIKIVVLVIFAILLGSALAWH. Positions 26–60 are disordered; that stretch reads HHNPTKAPTEAPHRGGGGGGGHNTPAPTQPPRQNT.

The chain is Spherulin-4 from Physarum polycephalum (Slime mold).